The following is a 73-amino-acid chain: MHFLKKSIFLVLFLGLVSLSICEKEKREDQNEEEVDENEEASEEKRGLMSILGKVAGNVLGGLFKPKENVQKM.

Positions 1–22 (MHFLKKSIFLVLFLGLVSLSIC) are cleaved as a signal peptide. Positions 23-46 (EKEKREDQNEEEVDENEEASEEKR) are excised as a propeptide. The disordered stretch occupies residues 25 to 45 (EKREDQNEEEVDENEEASEEK). Positions 30-42 (QNEEEVDENEEAS) are enriched in acidic residues.

As to expression, expressed by the skin glands.

The protein resides in the secreted. Functionally, antimicrobial peptide with activity against both Gram-positive and Gram-negative bacteria. This is Frenatin 3.1 from Nyctimystes infrafrenatus (White-lipped tree frog).